The primary structure comprises 393 residues: MMRITVLGATGSIGDSTLDVVRRHPDRYRVFALTANTQVDKLAALCRVFRPAMAVVGSATAAEVLRDQLGAEATGIDIRFGPEALEEAAAHPDCDAVMAAIVGAAGLRPTLAAVRAGKRVLLANKEALVMSGALFMDAVRQHGATVLPIDSEHNAIFQCLPQQRPSFGHGVARIVLTASGGPFRTRAVETLAEVTPDQACAHPNWVMGRKISVDSATMMNKGLEVIEAHWLFNVPVERLEVLIHPQSVIHSMVAYDDGSVLAQLGNPDMRTPIAYGLAYPERIEAGVPLLDLAATGTLAFEAPDLHRFPCLALAFDALRAGGTAPAVLNAANEVAVEAFLQRRIRFTEIAAVVGDTLARTAIGPADSLDTVFAADAQARRRAEHYIAASCLQS.

NADPH is bound by residues Thr10, Gly11, Ser12, Ile13, Gln38, and Asn124. Lys125 is a binding site for 1-deoxy-D-xylulose 5-phosphate. Glu126 lines the NADPH pocket. Residue Asp150 coordinates Mn(2+). Positions 151, 152, 179, and 202 each coordinate 1-deoxy-D-xylulose 5-phosphate. Glu152 is a Mn(2+) binding site. Gly208 is a binding site for NADPH. Positions 215, 220, 221, and 224 each coordinate 1-deoxy-D-xylulose 5-phosphate. Position 224 (Glu224) interacts with Mn(2+).

It belongs to the DXR family. The cofactor is Mg(2+). Requires Mn(2+) as cofactor.

The catalysed reaction is 2-C-methyl-D-erythritol 4-phosphate + NADP(+) = 1-deoxy-D-xylulose 5-phosphate + NADPH + H(+). It functions in the pathway isoprenoid biosynthesis; isopentenyl diphosphate biosynthesis via DXP pathway; isopentenyl diphosphate from 1-deoxy-D-xylulose 5-phosphate: step 1/6. Its function is as follows. Catalyzes the NADPH-dependent rearrangement and reduction of 1-deoxy-D-xylulose-5-phosphate (DXP) to 2-C-methyl-D-erythritol 4-phosphate (MEP). This Ralstonia nicotianae (strain ATCC BAA-1114 / GMI1000) (Ralstonia solanacearum) protein is 1-deoxy-D-xylulose 5-phosphate reductoisomerase.